A 262-amino-acid polypeptide reads, in one-letter code: Probable esterase azaC (262 aa).

Catalysis depends on charge relay system residues Ser-119, Asp-188, and His-216.

It belongs to the LovG family.

The protein operates within secondary metabolite biosynthesis. Its function is as follows. Probable esterase; part of the gene cluster that mediates the biosynthesis of azaphilones, a class of fungal metabolites characterized by a highly oxygenated pyrano-quinone bicyclic core and exhibiting a broad range of bioactivities. In the first step, the non-reducing polyketide synthase azaA forms the hexaketide precursor from successive condensations of five malonyl-CoA units, presumably with a simple acetyl-CoA starter unit. The reactive polyketide chain then undergoes a PT-mediated C2-C7 cyclization to afford the aromatic ring and is eventually released as an aldehyde through the R-domain. The putative ketoreductase azaE is proposed to catalyze the reduction of the terminal ketone resulting in the early culture product FK17-P2a. The monooxygenase azaH was demonstrated to be the only enzyme required to convert FK17-P2a to azanigerone E. AzaH first hydroxylates the benzaldehyde intermediate FK17-P2a at C4, which triggers the formation of the pyran-ring to afford azanigerone E. In parallel, the 2,4-dimethylhexanoyl chain is synthesized by the HR-PKS azaB and is proposed to be transferred to the C4-hydroxyl of azanigerone E by the acyltransferase azaD directly from the ACP domain of azaB. Alternatively, the 2,4-dimethyl-hexanoyl chain may be offloaded from the HR-PKS as a carboxylic acid and converted to an acyl-CoA by azaF. The resulting acyl-CoA molecule could then be taken up as a substrate by AzaD to form azanigerone B. To yield the carboxylic acid substituent in azanigerone A, the hydroxypropyl side chain of azanigerone B would need to undergo a C-C oxidative cleavage catalyzed by cytochrome P450 AzaI. AzaI is proposed to act on a vicinal diol that leads to a C-C bond scission either through an alkoxyradical intermediate or a peroxy complex. In the biosynthesis of azanigerone A, azanigerone B first undergoes hydroxylation at C10, possibly catalyzed by one of the two FAD-dependent monooxygenases encoded in the cluster, azaG or azaL, resulting in the vicinal diol azanigerone C. Oxidative cleavage of azanigerone C by azaI would yield the corresponding aldehyde derivative of azanigerone A. Finally, the dehydrogenase azaJ is proposed to convert the aldehyde functional group into the carboxylic acid, completing the conversion from azanigerone B to azanigerone A. Alternatively, the oxidation of aldehyde to carboxylic acid may be catalyzed by the same P450 enzyme azaI via consecutive oxidation or by endogenous alcohol dehydrogenase. The chain is Probable esterase azaC from Aspergillus niger (strain ATCC 1015 / CBS 113.46 / FGSC A1144 / LSHB Ac4 / NCTC 3858a / NRRL 328 / USDA 3528.7).